A 514-amino-acid chain; its full sequence is CUGBP Elav-like family member 2 (514 aa).

RRM domains follow at residues Ile-44–Ser-127, Arg-136–Thr-216, and Ala-429–Ser-507.

The protein belongs to the CELF/BRUNOL family.

It is found in the nucleus. The protein resides in the cytoplasm. RNA-binding protein implicated in the regulation of several post-transcriptional events. May be involved in pre-mRNA alternative splicing, mRNA translation repression and stability. The polypeptide is CUGBP Elav-like family member 2 (celf2) (Danio rerio (Zebrafish)).